The primary structure comprises 365 residues: Transcription factor MYB93 (365 aa).

HTH myb-type domains follow at residues E9–L61 and R62–L116. 2 DNA-binding regions (H-T-H motif) span residues W37 to L61 and W89 to L112.

In terms of assembly, interacts with FBX5.

It localises to the nucleus. Its subcellular location is the cytoplasm. Its function is as follows. Transcription factor that acts as a negative regulator of lateral root (LR) development. Required for normal auxin responses during LR development. May be part of a negative feedback loop stimulated specifically in the endodermis upon LR initiation to ensure that LRs are formed only in the correct place. This chain is Transcription factor MYB93, found in Arabidopsis thaliana (Mouse-ear cress).